We begin with the raw amino-acid sequence, 227 residues long: Cytochrome c oxidase subunit 2 (227 aa).

Residues 1–14 lie on the Mitochondrial intermembrane side of the membrane; sequence MAYPHQLGFQDATS. A helical membrane pass occupies residues 15–45; that stretch reads PIMEELLSFHDHTLMIVFLISSLVLYLISLM. Over 46 to 59 the chain is Mitochondrial matrix; it reads LTTKLTHTSTMDAQ. The chain crosses the membrane as a helical span at residues 60 to 87; it reads EVETVWTILPAIILIMIALPSLRILYMM. Residues 88-227 lie on the Mitochondrial intermembrane side of the membrane; the sequence is DEINNPLLTV…SFENWTTSMT (140 aa). Cu cation contacts are provided by His161, Cys196, Glu198, Cys200, His204, and Met207. Mg(2+) is bound at residue Glu198.

The protein belongs to the cytochrome c oxidase subunit 2 family. As to quaternary structure, component of the cytochrome c oxidase (complex IV, CIV), a multisubunit enzyme composed of 14 subunits. The complex is composed of a catalytic core of 3 subunits MT-CO1, MT-CO2 and MT-CO3, encoded in the mitochondrial DNA, and 11 supernumerary subunits COX4I, COX5A, COX5B, COX6A, COX6B, COX6C, COX7A, COX7B, COX7C, COX8 and NDUFA4, which are encoded in the nuclear genome. The complex exists as a monomer or a dimer and forms supercomplexes (SCs) in the inner mitochondrial membrane with NADH-ubiquinone oxidoreductase (complex I, CI) and ubiquinol-cytochrome c oxidoreductase (cytochrome b-c1 complex, complex III, CIII), resulting in different assemblies (supercomplex SCI(1)III(2)IV(1) and megacomplex MCI(2)III(2)IV(2)). Found in a complex with TMEM177, COA6, COX18, COX20, SCO1 and SCO2. Interacts with TMEM177 in a COX20-dependent manner. Interacts with COX20. Interacts with COX16. Cu cation serves as cofactor.

It is found in the mitochondrion inner membrane. The catalysed reaction is 4 Fe(II)-[cytochrome c] + O2 + 8 H(+)(in) = 4 Fe(III)-[cytochrome c] + 2 H2O + 4 H(+)(out). Component of the cytochrome c oxidase, the last enzyme in the mitochondrial electron transport chain which drives oxidative phosphorylation. The respiratory chain contains 3 multisubunit complexes succinate dehydrogenase (complex II, CII), ubiquinol-cytochrome c oxidoreductase (cytochrome b-c1 complex, complex III, CIII) and cytochrome c oxidase (complex IV, CIV), that cooperate to transfer electrons derived from NADH and succinate to molecular oxygen, creating an electrochemical gradient over the inner membrane that drives transmembrane transport and the ATP synthase. Cytochrome c oxidase is the component of the respiratory chain that catalyzes the reduction of oxygen to water. Electrons originating from reduced cytochrome c in the intermembrane space (IMS) are transferred via the dinuclear copper A center (CU(A)) of subunit 2 and heme A of subunit 1 to the active site in subunit 1, a binuclear center (BNC) formed by heme A3 and copper B (CU(B)). The BNC reduces molecular oxygen to 2 water molecules using 4 electrons from cytochrome c in the IMS and 4 protons from the mitochondrial matrix. The chain is Cytochrome c oxidase subunit 2 (MT-CO2) from Georychus capensis (Cape mole rat).